The following is a 643-amino-acid chain: UPF0313 protein CLD_0573 (643 aa).

The region spanning 295–566 (AIKEVKFSIT…RMQRALLQFS (272 aa)) is the Radical SAM core domain. Residues C309, C313, and C316 each contribute to the [4Fe-4S] cluster site. The disordered stretch occupies residues 598–643 (NKPYKKSHKKNNAKNNNNHYNKNNNKNKDISKKNKKNSLSKHKKRK). Basic residues predominate over residues 600 to 609 (PYKKSHKKNN). Residues 610 to 621 (AKNNNNHYNKNN) are compositionally biased toward low complexity. A compositionally biased stretch (basic residues) spans 630-643 (KNKKNSLSKHKKRK).

This sequence belongs to the UPF0313 family. It depends on [4Fe-4S] cluster as a cofactor.

The sequence is that of UPF0313 protein CLD_0573 from Clostridium botulinum (strain Okra / Type B1).